The following is a 245-amino-acid chain: Protein crossbronx (245 aa).

A UBC core domain is found at glutamine 20–serine 177.

The protein belongs to the ubiquitin-conjugating enzyme family. FTS subfamily.

In Drosophila virilis (Fruit fly), this protein is Protein crossbronx (cbx).